A 233-amino-acid chain; its full sequence is Low affinity immunoglobulin gamma Fc region receptor III-B (233 aa).

The signal sequence occupies residues 1 to 16 (MWQLLLPTALLLLVSA). Ig-like C2-type domains follow at residues 40–96 (KDSV…LSTL) and 121–179 (EDPI…VGSK). Cys-47 and Cys-89 form a disulfide bridge. 4 N-linked (GlcNAc...) asparagine glycosylation sites follow: Asn-56, Asn-63, Asn-82, and Asn-92. Cys-128 and Cys-172 form a disulfide bridge. Asn-180 and Asn-187 each carry an N-linked (GlcNAc...) asparagine glycan. Residue Ser-200 is the site of GPI-anchor amidated serine attachment. Positions 201–233 (SFSPPGYQVSFCLVMVLLFAVDTGLYFSVKTNI) are cleaved as a propeptide — removed in mature form.

In terms of assembly, monomer. Interacts with INPP5D/SHIP1. In terms of processing, glycosylated. Glycosylation plays an inhibitory role in the interaction with IgG3. Post-translationally, the soluble form is produced by a proteolytic cleavage. As to expression, expressed specifically by polymorphonuclear leukocytes (neutrophils). Also expressed by stimulated eosinophils.

It is found in the cell membrane. The protein resides in the secreted. Functionally, receptor for the Fc region of immunoglobulins gamma. Low affinity receptor. Binds complexed or aggregated IgG and also monomeric IgG. Contrary to III-A, is not capable to mediate antibody-dependent cytotoxicity and phagocytosis. May serve as a trap for immune complexes in the peripheral circulation which does not activate neutrophils. In Homo sapiens (Human), this protein is Low affinity immunoglobulin gamma Fc region receptor III-B (FCGR3B).